Here is a 307-residue protein sequence, read N- to C-terminus: Aspartate carbamoyltransferase catalytic subunit (307 aa).

Carbamoyl phosphate is bound by residues R54 and T55. Residue K83 coordinates L-aspartate. Carbamoyl phosphate-binding residues include R104, H132, and Q135. Residues R165 and R228 each contribute to the L-aspartate site. Carbamoyl phosphate is bound by residues L267 and P268.

Belongs to the aspartate/ornithine carbamoyltransferase superfamily. ATCase family. In terms of assembly, heterododecamer (2C3:3R2) of six catalytic PyrB chains organized as two trimers (C3), and six regulatory PyrI chains organized as three dimers (R2).

It catalyses the reaction carbamoyl phosphate + L-aspartate = N-carbamoyl-L-aspartate + phosphate + H(+). It functions in the pathway pyrimidine metabolism; UMP biosynthesis via de novo pathway; (S)-dihydroorotate from bicarbonate: step 2/3. Its function is as follows. Catalyzes the condensation of carbamoyl phosphate and aspartate to form carbamoyl aspartate and inorganic phosphate, the committed step in the de novo pyrimidine nucleotide biosynthesis pathway. This Clostridium perfringens (strain ATCC 13124 / DSM 756 / JCM 1290 / NCIMB 6125 / NCTC 8237 / Type A) protein is Aspartate carbamoyltransferase catalytic subunit.